The chain runs to 590 residues: Plasmepsin V (590 aa).

The Lumenal portion of the chain corresponds to 1–544 (MNNYFLRKEN…EKENIFLKVS (544 aa)). The stretch at 33-81 (CNNVENKIDNVGKKIENVGKKIGDMENKNDNVENKNDNVGNKNDNVKNA) forms a coiled coil. In terms of domain architecture, Peptidase A1 spans 100–514 (YFLDIDIGKP…DLQQNQIAFI (415 aa)). Residue Asp-118 is part of the active site. 7 cysteine pairs are disulfide-bonded: Cys-128–Cys-211, Cys-131–Cys-134, Cys-155–Cys-166, Cys-160–Cys-171, Cys-259–Cys-518, Cys-389–Cys-434, and Cys-443–Cys-479. A compositionally biased stretch (basic and acidic residues) spans 282-291 (KEKQKMDKSD). Residues 282–316 (KEKQKMDKSDNNSSNKGNVSIKLKNNDKNDDEENN) are disordered. Positions 292–304 (NNSSNKGNVSIKL) are enriched in low complexity. Residue Asp-365 is part of the active site. Residues 545 to 565 (YINLYCLWLLLALTILLSLIL) traverse the membrane as a helical segment. Residues 566–590 (YVRKMFYMDYFPLSDQNKSPIQEST) lie on the Cytoplasmic side of the membrane.

The protein belongs to the peptidase A1 family. In terms of assembly, component of a complex composed of SPC25 and PMV; the interaction is mediated via the transmembrane domains. The complex interacts with the SEC61 channel-forming translocon complex and is involved in the recognition and import of PEXEL motif-containing proteins into the ER for subsequent export. In terms of processing, it is not clear if the zymogen has a cleavable propeptide. In vitro, appears to be cleaved between Asn-80 and Ala-81. Cleavage of the putative propeptide is dispensable for catalytic activity.

The protein localises to the endoplasmic reticulum membrane. Its activity is regulated as follows. Inhibited by peptidomimetic inhibitor WEHI-842. Inhibited by Cu(2+) and Hg(2+). Its function is as follows. During the asexual blood stage, plays an essential role in the export of several proteins into the host erythrocytes by cleaving the pentameric localization motif RxLxE/Q/D (termed Plasmodium export element (PEXEL)) located downstream of the N-terminal secretory signal sequence. Specifically, cleaves after the leucine residue in the RxLxE/Q/D (or RxLxxE) motif of exported proteins including RESA, EMP2, EMP3, KAHRP, RIF/Rifin and STEVOR. Also, by regulating protein export, plays an essential role in gametocyte development and thus, parasite transmission to the mosquito vector. The polypeptide is Plasmepsin V (Plasmodium falciparum (isolate 3D7)).